The chain runs to 480 residues: Adenosylhomocysteinase (480 aa).

Thr63, Asp142, and Glu203 together coordinate substrate. Residue 204–206 (TTT) coordinates NAD(+). The substrate site is built by Lys233 and Asp237. Residues Asn238, 267 to 272 (GYGDVG), Glu290, Asn325, 346 to 348 (IGH), and Asn394 each bind NAD(+).

The protein belongs to the adenosylhomocysteinase family. The cofactor is NAD(+).

The protein resides in the cytoplasm. It catalyses the reaction S-adenosyl-L-homocysteine + H2O = L-homocysteine + adenosine. Its pathway is amino-acid biosynthesis; L-homocysteine biosynthesis; L-homocysteine from S-adenosyl-L-homocysteine: step 1/1. May play a key role in the regulation of the intracellular concentration of adenosylhomocysteine. The sequence is that of Adenosylhomocysteinase from Xanthomonas axonopodis pv. citri (strain 306).